The sequence spans 259 residues: 5'-nucleotidase SurE 1 (259 aa).

A divalent metal cation-binding residues include aspartate 16, aspartate 17, serine 48, and asparagine 101.

It belongs to the SurE nucleotidase family. The cofactor is a divalent metal cation.

The protein localises to the cytoplasm. The enzyme catalyses a ribonucleoside 5'-phosphate + H2O = a ribonucleoside + phosphate. Its function is as follows. Nucleotidase that shows phosphatase activity on nucleoside 5'-monophosphates. This is 5'-nucleotidase SurE 1 from Burkholderia lata (strain ATCC 17760 / DSM 23089 / LMG 22485 / NCIMB 9086 / R18194 / 383).